A 1025-amino-acid chain; its full sequence is AP-2 complex subunit alpha (1025 aa).

A disordered region spans residues 713-737 (RSIMVPMPPPSRRNTIDDVNSKISS). Thr727 is subject to Phosphothreonine. Residue Ser733 is modified to Phosphoserine.

The protein belongs to the adaptor complexes large subunit family. Adaptor protein complex 2 (AP-2) is a heterotetramer composed of two large adaptins (alpha-type subunit APL3 and beta-type subunit APL1), a medium chain (mu-type subunit APM4) and a small adaptin (sigma-type subunit APS2).

It localises to the cell membrane. Its subcellular location is the membrane. The protein localises to the coated pit. Functionally, adaptins are components of the adaptor complexes which link clathrin to receptors in coated vesicles. Clathrin-associated protein complexes are believed to interact with the cytoplasmic tails of membrane proteins, leading to their selection and concentration. Alpha adaptin is a subunit of the plasma membrane adaptor. Facilitates interaction between APL1 and APS2. The polypeptide is AP-2 complex subunit alpha (APL3) (Saccharomyces cerevisiae (strain ATCC 204508 / S288c) (Baker's yeast)).